The chain runs to 456 residues: MKETTGADFKSATDSENKKLFIETYGCQMNVADSEVIASIMQMAGYHVCETLDEADAVFMNTCSIRDNAEQKILNRLEFFHSMKKNKRRNLIVGVLGCMAERVKDDLIENHHVDLVVGPDAYLTLPDLVASVEAGEKAINVELSTTETYREVIPSRICGNHISGFVSIMRGCNNFCHYCIVPYTRGRERSRDVESILNEVRDLADKGYKEVTLLGQNVNSYRFEKEGEIITFPMLLRTVAEAVPDMRVRFTTSHPKDMSDETLQVIAETPNVCKHIHLPVQSGSSRILKLMNRKYTREWYLERVAAIRRIIPDCGLSTDIFSGYHSETEEDHQESLSLMRECAYDSAFMFKYSERPGTYASKHLPDDVPEEVKIRRLNEIIELQNRLSAESNARDVGKTFEVMVEGVSKRSREQLFGRTQQNKVVVFDRGNHRIGDFVHVRITEASSATLKGEEVF.

Residues 18-134 form the MTTase N-terminal domain; sequence KKLFIETYGC…LPDLVASVEA (117 aa). [4Fe-4S] cluster contacts are provided by cysteine 27, cysteine 63, cysteine 98, cysteine 172, cysteine 176, and cysteine 179. Residues 158-390 enclose the Radical SAM core domain; that stretch reads CGNHISGFVS…IELQNRLSAE (233 aa). Positions 393-456 constitute a TRAM domain; sequence ARDVGKTFEV…SATLKGEEVF (64 aa).

It belongs to the methylthiotransferase family. MiaB subfamily. As to quaternary structure, monomer. [4Fe-4S] cluster serves as cofactor.

Its subcellular location is the cytoplasm. It catalyses the reaction N(6)-dimethylallyladenosine(37) in tRNA + (sulfur carrier)-SH + AH2 + 2 S-adenosyl-L-methionine = 2-methylsulfanyl-N(6)-dimethylallyladenosine(37) in tRNA + (sulfur carrier)-H + 5'-deoxyadenosine + L-methionine + A + S-adenosyl-L-homocysteine + 2 H(+). Catalyzes the methylthiolation of N6-(dimethylallyl)adenosine (i(6)A), leading to the formation of 2-methylthio-N6-(dimethylallyl)adenosine (ms(2)i(6)A) at position 37 in tRNAs that read codons beginning with uridine. This chain is tRNA-2-methylthio-N(6)-dimethylallyladenosine synthase, found in Phocaeicola vulgatus (strain ATCC 8482 / DSM 1447 / JCM 5826 / CCUG 4940 / NBRC 14291 / NCTC 11154) (Bacteroides vulgatus).